The chain runs to 360 residues: Hereditary hemochromatosis protein homolog (360 aa).

The N-terminal stretch at 1-25 is a signal peptide; it reads MDRSAGLPVRLLLLLLLLLLWSVAP. Residues 26 to 127 form an alpha-1 region; sequence QALRPGSHSL…KVTKLRVVPE (102 aa). At 26-319 the chain is on the extracellular side; sequence QALRPGSHSL…WEPSRSQDMI (294 aa). Asn115, Asn143, Asn167, and Asn247 each carry an N-linked (GlcNAc...) asparagine glycan. Positions 128–218 are alpha-2; sequence SHILQVILGC…ELQRGVLGQQ (91 aa). Intrachain disulfides connect Cys137/Cys200 and Cys238/Cys295. The tract at residues 219–310 is alpha-3; the sequence is VPTLVKVTRH…GLDQPLTATW (92 aa). The Ig-like C1-type domain occupies 220–309; the sequence is PTLVKVTRHW…PGLDQPLTAT (90 aa). Residues 311-319 form a connecting peptide region; it reads EPSRSQDMI. Residues 320-340 traverse the membrane as a helical segment; that stretch reads IGIISGITICAIFFVGILILV. The Cytoplasmic portion of the chain corresponds to 341-360; sequence LRKRKVSGGTMGDYVLTECE.

It belongs to the MHC class I family. As to quaternary structure, binds TFR through the extracellular domain in a pH-dependent manner.

It localises to the cell membrane. Binds to transferrin receptor (TFR) and reduces its affinity for iron-loaded transferrin. This Rattus norvegicus (Rat) protein is Hereditary hemochromatosis protein homolog (Hfe).